Here is a 144-residue protein sequence, read N- to C-terminus: MRYLVISLFAVSLLMAGSALVGNAADAAKAPKKAIELKHGTSKRMHVMFNHTTHKDIACEQCHHDSPAPDKPYASCTDNDCHATPGPRERDTMSMFVAYHAKDTDRSCYGCHKKMAAQHPEFTGCRPCHMSQQARKEAAASEKK.

Residues 1 to 24 (MRYLVISLFAVSLLMAGSALVGNA) form the signal peptide. Heme c is bound by residues His-51, His-54, Cys-59, Cys-62, His-63, His-64, Cys-76, Cys-81, His-82, His-100, Cys-108, Cys-111, His-112, Cys-125, Cys-128, and His-129.

This sequence belongs to the cytochrome c family. As to quaternary structure, homodimer. Heterotrimer of cytochrome c3 FDH2C and formate dehydrogenase FDH2 alpha and beta subunits that forms the FdhABC(3) complex. Binds 4 heme c groups per subunit.

It is found in the periplasm. Its function is as follows. Participates in sulfate respiration coupled with phosphorylation by transferring electrons from the enzyme dehydrogenase to ferredoxin. Gamma chain of the formate dehydrogenase (FDH) that catalyzes the reversible two-electron oxidation of formate to carbon dioxide. The gamma subunit of formate dehydrogenase forms a c-type heme. This Nitratidesulfovibrio vulgaris (strain ATCC 29579 / DSM 644 / CCUG 34227 / NCIMB 8303 / VKM B-1760 / Hildenborough) (Desulfovibrio vulgaris) protein is Cytochrome c3.